We begin with the raw amino-acid sequence, 200 residues long: Interferon lambda-2 (200 aa).

A signal peptide spans 1–25 (MKLDMTGDCTPVLVLMAAVLTVTGA).

Belongs to the lambda interferon family.

Its subcellular location is the secreted. In terms of biological role, cytokine with antiviral, antitumour and immunomodulatory activities. Plays a critical role in the antiviral host defense, predominantly in the epithelial tissues. Acts as a ligand for the heterodimeric class II cytokine receptor composed of IL10RB and IFNLR1, and receptor engagement leads to the activation of the JAK/STAT signaling pathway resulting in the expression of IFN-stimulated genes (ISG), which mediate the antiviral state. Has a restricted receptor distribution and therefore restricted targets: is primarily active in epithelial cells and this cell type-selective action is because of the epithelial cell-specific expression of its receptor IFNLR1. Seems not to be essential for early virus-activated host defense in vaginal infection, but plays an important role in Toll-like receptor (TLR)-induced antiviral defense. Plays a significant role in the antiviral immune defense in the intestinal epithelium. Exerts an immunomodulatory effect by up-regulating MHC class I antigen expression. In Homo sapiens (Human), this protein is Interferon lambda-2 (IFNL2).